The following is a 224-amino-acid chain: 25 kDa integral membrane protein (224 aa).

At 1–12 the chain is on the cytoplasmic side; the sequence is MKLSFTKVSLTN. Residues 13–33 traverse the membrane as a helical segment; it reads ILILFNCLFIIFSMIVLTFGV. Residues 34 to 52 are Extracellular-facing; it reads IPQIYLLKFANILHGVRPS. A helical transmembrane segment spans residues 53–73; that stretch reads IFPIVCFTGSFVIIVACVGII. Topologically, residues 74 to 80 are cytoplasmic; sequence GLMKGGK. The helical transmembrane segment at 81 to 101 threads the bilayer; it reads CLLTMHIIALIIATIIDISTA. Topologically, residues 102–189 are extracellular; that stretch reads TLSAIKQNEF…LNKYVRYYID (88 aa). N-linked (GlcNAc...) asparagine glycosylation occurs at asparagine 120. A helical membrane pass occupies residues 190 to 210; the sequence is ILIYLCFIFGFIKLIYSLFTF. At 211–224 the chain is on the cytoplasmic side; it reads TQRQRIFSEKTPVA.

This sequence belongs to the tetraspanin (TM4SF) family.

It localises to the membrane. In Schistosoma japonicum (Blood fluke), this protein is 25 kDa integral membrane protein.